A 550-amino-acid chain; its full sequence is Glucose-6-phosphate isomerase (550 aa).

The Proton donor role is filled by Glu356. Catalysis depends on residues His387 and Lys515.

Belongs to the GPI family.

Its subcellular location is the cytoplasm. The catalysed reaction is alpha-D-glucose 6-phosphate = beta-D-fructose 6-phosphate. It functions in the pathway carbohydrate biosynthesis; gluconeogenesis. Its pathway is carbohydrate degradation; glycolysis; D-glyceraldehyde 3-phosphate and glycerone phosphate from D-glucose: step 2/4. Functionally, catalyzes the reversible isomerization of glucose-6-phosphate to fructose-6-phosphate. The polypeptide is Glucose-6-phosphate isomerase (Aliivibrio fischeri (strain MJ11) (Vibrio fischeri)).